We begin with the raw amino-acid sequence, 461 residues long: MTQDYETVLKGKYPAKEHALRVADYVKSKVPDATGILYVEGRMTKMLEDNDEPEPFRQRRYFYYLTGCPLADCHYIFDLATSKSTLFIPPIDPDSVIWSGLPVSAAEAKELYDVDEVKYTTDVNAELARLGKGPKKTVFAIQNQVLDSITFLEFDEKNFSILKDAIERCRVVKDDYEIALTRKANAVSTVAHHAVVEYVKKAKNERELEALFLQRSVANGAKNQAYHGIFAGGRAAATLHYVANDAPLEGKLNLLLDAGTEWNCYASDITRTFPISGKFSKESRQIYDIVLKMQLETTAALKEGVIWDEIHLLAHKIAIDGLHLIGILKGDKDEILKNRTSVAFFPHGLGHYLGMDTHDVGGNANYADRDPMFRYLRVRGALPAGSIVTVEPGIYFCSFIIEPYLKDPVHSKFIDSAVLEKYWDVGGVRIEDNILITKDGSENLTPTIKDPDELEKIIQAS.

Mn(2+) contacts are provided by D257, D268, E391, and E431.

This sequence belongs to the peptidase M24B family. Mn(2+) serves as cofactor.

The enzyme catalyses Release of any N-terminal amino acid, including proline, that is linked to proline, even from a dipeptide or tripeptide.. Functionally, catalyzes the removal of a penultimate prolyl residue from the N-termini of peptides. The chain is Probable Xaa-Pro aminopeptidase PEPP (PEPP) from Colletotrichum graminicola (strain M1.001 / M2 / FGSC 10212) (Maize anthracnose fungus).